We begin with the raw amino-acid sequence, 922 residues long: Metabotropic glutamate receptor 7 (922 aa).

An N-terminal signal peptide occupies residues 1 to 34; that stretch reads MVQLRKLLRVLTLMKFPCCVLEVLLCALAAAARG. Over 35–590 the chain is Extracellular; it reads QEMYAPHSIR…IIKLEWHSPW (556 aa). The cysteines at positions 67 and 109 are disulfide-linked. A glycan (N-linked (GlcNAc...) asparagine) is linked at N98. L-glutamate is bound by residues S159, 180-182, Y230, and D314; that span reads AST. Cystine bridges form between C249–C541, C374–C390, C430–C437, C523–C542, C527–C545, C548–C560, and C563–C576. K407 contributes to the L-glutamate binding site. 2 N-linked (GlcNAc...) asparagine glycosylation sites follow: N458 and N486. N572 carries an N-linked (GlcNAc...) asparagine glycan. A helical membrane pass occupies residues 591-615; that stretch reads AVIPVFLAMLGIIATIFVMATFIRY. Residues 616-627 are Cytoplasmic-facing; sequence NDTPIVRASGRE. Residues 628 to 648 traverse the membrane as a helical segment; sequence LSYVLLTGIFLCYIITFLMIA. Over 649–654 the chain is Extracellular; the sequence is KPDVAV. A helical transmembrane segment spans residues 655 to 675; that stretch reads CSFRRVFLGLGMCISYAALLT. Residues 676–702 lie on the Cytoplasmic side of the membrane; the sequence is KTNRIYRIFEQGKKSVTAPRLISPTSQ. Residues 703 to 723 form a helical membrane-spanning segment; that stretch reads LAITSSLISVQLLGVFIWFGV. At 724–753 the chain is on the extracellular side; the sequence is DPPNIIIDYDEHKTMNPEQARGVLKCDITD. The chain crosses the membrane as a helical span at residues 754-775; the sequence is LQIICSLGYSILLMVTCTVYAI. Topologically, residues 776–788 are cytoplasmic; sequence KTRGVPENFNEAK. A helical membrane pass occupies residues 789–810; sequence PIGFTMYTTCIVWLAFIPIFFG. The Extracellular segment spans residues 811–825; it reads TAQSAEKLYIQTTTL. A helical membrane pass occupies residues 826-850; it reads TISMNLSASVALGMLYMPKVYIIIF. The Cytoplasmic segment spans residues 851–922; sequence HPELNVQKRK…VTWYTIPPTV (72 aa).

This sequence belongs to the G-protein coupled receptor 3 family. As to quaternary structure, homodimer. Interacts with PICK1.

The protein resides in the cell membrane. Its function is as follows. G-protein coupled receptor activated by glutamate that regulates axon outgrowth through the MAPK-cAMP-PKA signaling pathway during neuronal development. Ligand binding causes a conformation change that triggers signaling via guanine nucleotide-binding proteins (G proteins) and modulates the activity of downstream effectors, such as adenylate cyclase that it inhibits. The protein is Metabotropic glutamate receptor 7 (GRM7) of Pongo abelii (Sumatran orangutan).